The following is a 356-amino-acid chain: Glycerol-1-phosphate dehydrogenase [NAD(P)+] (356 aa).

Residues 103-107 (GRSID) and 125-128 (TAAS) contribute to the NAD(+) site. Position 130 (Asp130) interacts with substrate. Residue Ser134 participates in NAD(+) binding. Asp177 is a binding site for substrate. Zn(2+) is bound by residues Asp177 and His257. His261 serves as a coordination point for substrate. His273 lines the Zn(2+) pocket.

It belongs to the glycerol-1-phosphate dehydrogenase family. It depends on Zn(2+) as a cofactor.

It localises to the cytoplasm. It carries out the reaction sn-glycerol 1-phosphate + NAD(+) = dihydroxyacetone phosphate + NADH + H(+). It catalyses the reaction sn-glycerol 1-phosphate + NADP(+) = dihydroxyacetone phosphate + NADPH + H(+). Its pathway is membrane lipid metabolism; glycerophospholipid metabolism. Catalyzes the NAD(P)H-dependent reduction of dihydroxyacetonephosphate (DHAP or glycerone phosphate) to glycerol 1-phosphate (G1P). The G1P thus generated is used as the glycerophosphate backbone of phospholipids in the cellular membranes of Archaea. The polypeptide is Glycerol-1-phosphate dehydrogenase [NAD(P)+] (Methanosarcina mazei (strain ATCC BAA-159 / DSM 3647 / Goe1 / Go1 / JCM 11833 / OCM 88) (Methanosarcina frisia)).